A 521-amino-acid polypeptide reads, in one-letter code: MKVSLWLTLLGVNLSLALAVGTDFPASCQAFSPDTRAANAHREFTEYVPAGTNLSLPYNDATCARPNQVVTVDLCRVALYVETSNRSSVTTEIWLPRNWTGRFLGTGNGGIDGCIKYEDLAYGAANGFAVVGSNNGHNGTTAASFYQNSDVLADFAWRALHLSTVIGKEITQAFYGEPHRKSYYLGCSLGGRQGINSAVEFPDDFDGIIAGSPAVDFNSLVSWRASFFPITGSANSTDFISVSTWKDLIHAEVLTQCDTLDCVNDGIIEDPSLCNFCPEALKCTDDRINNCLSPAQVEIVRKVFSPMYGEDGQLIFPAMQPGSELEAADQLYTGKPFRYSKEWFQYVVYNPSWDPAEFDIHDAKVADDLNPQNIRTWPNDLSNYEKRGGKIITFHGQQDGKITSFNTERFYNHLATAMNMSSSELDNFFRFFRISGMSHCSSGPGAWAFGQGGSPAPAMTPFNGNENILAALVAWVEHGVAPETITGTKYVDDNPELGISIRRSHCRFVIQLNHGRHELCY.

Residues 1–19 (MKVSLWLTLLGVNLSLALA) form the signal peptide. N-linked (GlcNAc...) asparagine glycosylation is found at N13, N53, N85, N98, and N138. Intrachain disulfides connect C28–C75 and C63–C114. Disulfide bonds link C187/C440, C257/C274, C283/C291, and C506/C520. S188 acts as the Acyl-ester intermediate in catalysis. N-linked (GlcNAc...) asparagine glycosylation is present at N235. Positions 258, 261, 263, 265, and 267 each coordinate Ca(2+). Residue D399 is the Charge relay system of the active site. N419 carries an N-linked (GlcNAc...) asparagine glycan. Catalysis depends on H439, which acts as the Charge relay system.

Belongs to the tannase family.

The protein localises to the secreted. It carries out the reaction feruloyl-polysaccharide + H2O = ferulate + polysaccharide.. In terms of biological role, involved in degradation of plant cell walls. Hydrolyzes the feruloyl-arabinose ester bond in arabinoxylans as well as the feruloyl-galactose and feruloyl-arabinose ester bonds in pectin. This is Probable feruloyl esterase B-2 (faeB-2) from Aspergillus flavus (strain ATCC 200026 / FGSC A1120 / IAM 13836 / NRRL 3357 / JCM 12722 / SRRC 167).